Here is a 174-residue protein sequence, read N- to C-terminus: Ribosome maturation factor RimM (174 aa).

Residues 99–172 form the PRC barrel domain; it reads ADEFFYHDVI…RLVIRPIAGL (74 aa).

This sequence belongs to the RimM family. As to quaternary structure, binds ribosomal protein uS19.

Its subcellular location is the cytoplasm. An accessory protein needed during the final step in the assembly of 30S ribosomal subunit, possibly for assembly of the head region. Essential for efficient processing of 16S rRNA. May be needed both before and after RbfA during the maturation of 16S rRNA. It has affinity for free ribosomal 30S subunits but not for 70S ribosomes. The protein is Ribosome maturation factor RimM of Chloroflexus aurantiacus (strain ATCC 29366 / DSM 635 / J-10-fl).